Here is a 94-residue protein sequence, read N- to C-terminus: Exodeoxyribonuclease 7 small subunit (94 aa).

It belongs to the XseB family. As to quaternary structure, heterooligomer composed of large and small subunits.

The protein resides in the cytoplasm. The enzyme catalyses Exonucleolytic cleavage in either 5'- to 3'- or 3'- to 5'-direction to yield nucleoside 5'-phosphates.. Functionally, bidirectionally degrades single-stranded DNA into large acid-insoluble oligonucleotides, which are then degraded further into small acid-soluble oligonucleotides. This Ralstonia nicotianae (strain ATCC BAA-1114 / GMI1000) (Ralstonia solanacearum) protein is Exodeoxyribonuclease 7 small subunit.